The primary structure comprises 436 residues: Ribulose bisphosphate carboxylase large chain (436 aa).

Substrate contacts are provided by N104 and T154. Catalysis depends on K156, which acts as the Proton acceptor. Residue K158 coordinates substrate. Mg(2+) contacts are provided by K182, D184, and E185. At K182 the chain carries N6-carboxylysine. H275 functions as the Proton acceptor in the catalytic mechanism. Substrate is bound by residues R276, H308, and S360.

Belongs to the RuBisCO large chain family. Type I subfamily. As to quaternary structure, heterohexadecamer of 8 large chains and 8 small chains; disulfide-linked. The disulfide link is formed within the large subunit homodimers. The cofactor is Mg(2+). In terms of processing, the disulfide bond which can form in the large chain dimeric partners within the hexadecamer appears to be associated with oxidative stress and protein turnover.

It is found in the plastid. The protein localises to the chloroplast. The catalysed reaction is 2 (2R)-3-phosphoglycerate + 2 H(+) = D-ribulose 1,5-bisphosphate + CO2 + H2O. It catalyses the reaction D-ribulose 1,5-bisphosphate + O2 = 2-phosphoglycolate + (2R)-3-phosphoglycerate + 2 H(+). Functionally, ruBisCO catalyzes two reactions: the carboxylation of D-ribulose 1,5-bisphosphate, the primary event in carbon dioxide fixation, as well as the oxidative fragmentation of the pentose substrate in the photorespiration process. Both reactions occur simultaneously and in competition at the same active site. The chain is Ribulose bisphosphate carboxylase large chain from Euglena anabaena (Euglenaria anabaena).